The sequence spans 152 residues: SsrA-binding protein (152 aa).

It belongs to the SmpB family.

It is found in the cytoplasm. In terms of biological role, required for rescue of stalled ribosomes mediated by trans-translation. Binds to transfer-messenger RNA (tmRNA), required for stable association of tmRNA with ribosomes. tmRNA and SmpB together mimic tRNA shape, replacing the anticodon stem-loop with SmpB. tmRNA is encoded by the ssrA gene; the 2 termini fold to resemble tRNA(Ala) and it encodes a 'tag peptide', a short internal open reading frame. During trans-translation Ala-aminoacylated tmRNA acts like a tRNA, entering the A-site of stalled ribosomes, displacing the stalled mRNA. The ribosome then switches to translate the ORF on the tmRNA; the nascent peptide is terminated with the 'tag peptide' encoded by the tmRNA and targeted for degradation. The ribosome is freed to recommence translation, which seems to be the essential function of trans-translation. This chain is SsrA-binding protein, found in Gloeobacter violaceus (strain ATCC 29082 / PCC 7421).